A 388-amino-acid chain; its full sequence is Chorismate synthase (388 aa).

Residues Arg-39 and Arg-45 each coordinate NADP(+). Residues 132–134 (RSS), 251–252 (NA), Gly-296, 311–315 (KPIPT), and Arg-337 contribute to the FMN site.

The protein belongs to the chorismate synthase family. In terms of assembly, homotetramer. Requires FMNH2 as cofactor.

It carries out the reaction 5-O-(1-carboxyvinyl)-3-phosphoshikimate = chorismate + phosphate. Its pathway is metabolic intermediate biosynthesis; chorismate biosynthesis; chorismate from D-erythrose 4-phosphate and phosphoenolpyruvate: step 7/7. Functionally, catalyzes the anti-1,4-elimination of the C-3 phosphate and the C-6 proR hydrogen from 5-enolpyruvylshikimate-3-phosphate (EPSP) to yield chorismate, which is the branch point compound that serves as the starting substrate for the three terminal pathways of aromatic amino acid biosynthesis. This reaction introduces a second double bond into the aromatic ring system. This chain is Chorismate synthase, found in Staphylococcus aureus (strain Mu50 / ATCC 700699).